Reading from the N-terminus, the 217-residue chain is Large ribosomal subunit protein uL3 (217 aa).

Positions 127-162 (GFSRGPMSHGSKNHRAPGSTGAGTTPGRIYPGKRMA) are disordered. The segment covering 142–153 (APGSTGAGTTPG) has biased composition (low complexity).

It belongs to the universal ribosomal protein uL3 family. Part of the 50S ribosomal subunit. Forms a cluster with proteins L14 and L19.

Functionally, one of the primary rRNA binding proteins, it binds directly near the 3'-end of the 23S rRNA, where it nucleates assembly of the 50S subunit. The chain is Large ribosomal subunit protein uL3 from Prochlorococcus marinus (strain MIT 9312).